Consider the following 461-residue polypeptide: Bifunctional protein GlmU (461 aa).

A pyrophosphorylase region spans residues 1 to 232 (MNLQIIILAA…SFEVQGINNR (232 aa)). UDP-N-acetyl-alpha-D-glucosamine-binding positions include 8 to 11 (LAAG), lysine 22, glutamine 73, and 78 to 79 (GT). Aspartate 102 provides a ligand contact to Mg(2+). UDP-N-acetyl-alpha-D-glucosamine is bound by residues glycine 142, glutamate 157, and asparagine 230. Asparagine 230 is a binding site for Mg(2+). The tract at residues 233 to 253 (QQLQQLERTWQQRAANQLMEK) is linker. The segment at 254–461 (GATLADANRF…WKRPVKRERD (208 aa)) is N-acetyltransferase. Arginine 336 and lysine 354 together coordinate UDP-N-acetyl-alpha-D-glucosamine. The active-site Proton acceptor is histidine 366. Residues tyrosine 369 and asparagine 380 each coordinate UDP-N-acetyl-alpha-D-glucosamine. Residues alanine 383, 389–390 (NY), serine 408, and alanine 426 each bind acetyl-CoA.

This sequence in the N-terminal section; belongs to the N-acetylglucosamine-1-phosphate uridyltransferase family. In the C-terminal section; belongs to the transferase hexapeptide repeat family. As to quaternary structure, homotrimer. The cofactor is Mg(2+).

It localises to the cytoplasm. The enzyme catalyses alpha-D-glucosamine 1-phosphate + acetyl-CoA = N-acetyl-alpha-D-glucosamine 1-phosphate + CoA + H(+). It carries out the reaction N-acetyl-alpha-D-glucosamine 1-phosphate + UTP + H(+) = UDP-N-acetyl-alpha-D-glucosamine + diphosphate. The protein operates within nucleotide-sugar biosynthesis; UDP-N-acetyl-alpha-D-glucosamine biosynthesis; N-acetyl-alpha-D-glucosamine 1-phosphate from alpha-D-glucosamine 6-phosphate (route II): step 2/2. It participates in nucleotide-sugar biosynthesis; UDP-N-acetyl-alpha-D-glucosamine biosynthesis; UDP-N-acetyl-alpha-D-glucosamine from N-acetyl-alpha-D-glucosamine 1-phosphate: step 1/1. Its pathway is bacterial outer membrane biogenesis; LPS lipid A biosynthesis. In terms of biological role, catalyzes the last two sequential reactions in the de novo biosynthetic pathway for UDP-N-acetylglucosamine (UDP-GlcNAc). The C-terminal domain catalyzes the transfer of acetyl group from acetyl coenzyme A to glucosamine-1-phosphate (GlcN-1-P) to produce N-acetylglucosamine-1-phosphate (GlcNAc-1-P), which is converted into UDP-GlcNAc by the transfer of uridine 5-monophosphate (from uridine 5-triphosphate), a reaction catalyzed by the N-terminal domain. In Legionella pneumophila (strain Paris), this protein is Bifunctional protein GlmU.